The following is a 109-amino-acid chain: Lipoprotein BsmA (109 aa).

A signal peptide spans 1-24 (MVSRKRNSVIYRFASLLLVLMLSA). Cysteine 25 is lipidated: N-palmitoyl cysteine. Residue cysteine 25 is the site of S-diacylglycerol cysteine attachment.

Belongs to the BhsA/McbA family.

It localises to the cell membrane. In terms of biological role, involved in protection of biofilms against oxidative stress. This chain is Lipoprotein BsmA (bsmA), found in Escherichia coli (strain K12).